A 373-amino-acid chain; its full sequence is Queuine tRNA-ribosyltransferase (373 aa).

Aspartate 90 acts as the Proton acceptor in catalysis. Residues 90-94 (DSGGF), aspartate 144, glutamine 193, and glycine 220 each bind substrate. The segment at 251–257 (GVGTPED) is RNA binding. Aspartate 270 (nucleophile) is an active-site residue. The interval 275–279 (TRNAR) is RNA binding; important for wobble base 34 recognition. Residues cysteine 308, cysteine 310, cysteine 313, and histidine 339 each contribute to the Zn(2+) site.

Belongs to the queuine tRNA-ribosyltransferase family. As to quaternary structure, homodimer. Within each dimer, one monomer is responsible for RNA recognition and catalysis, while the other monomer binds to the replacement base PreQ1. It depends on Zn(2+) as a cofactor.

It catalyses the reaction 7-aminomethyl-7-carbaguanine + guanosine(34) in tRNA = 7-aminomethyl-7-carbaguanosine(34) in tRNA + guanine. It functions in the pathway tRNA modification; tRNA-queuosine biosynthesis. Functionally, catalyzes the base-exchange of a guanine (G) residue with the queuine precursor 7-aminomethyl-7-deazaguanine (PreQ1) at position 34 (anticodon wobble position) in tRNAs with GU(N) anticodons (tRNA-Asp, -Asn, -His and -Tyr). Catalysis occurs through a double-displacement mechanism. The nucleophile active site attacks the C1' of nucleotide 34 to detach the guanine base from the RNA, forming a covalent enzyme-RNA intermediate. The proton acceptor active site deprotonates the incoming PreQ1, allowing a nucleophilic attack on the C1' of the ribose to form the product. After dissociation, two additional enzymatic reactions on the tRNA convert PreQ1 to queuine (Q), resulting in the hypermodified nucleoside queuosine (7-(((4,5-cis-dihydroxy-2-cyclopenten-1-yl)amino)methyl)-7-deazaguanosine). The polypeptide is Queuine tRNA-ribosyltransferase (Campylobacter jejuni subsp. jejuni serotype O:2 (strain ATCC 700819 / NCTC 11168)).